A 195-amino-acid polypeptide reads, in one-letter code: Ribosome maturation factor RimM (195 aa).

Residues 101 to 191 enclose the PRC barrel domain; it reads ADEWYPKDLI…YLTLDPPGGL (91 aa).

Belongs to the RimM family. As to quaternary structure, binds ribosomal protein uS19.

It is found in the cytoplasm. In terms of biological role, an accessory protein needed during the final step in the assembly of 30S ribosomal subunit, possibly for assembly of the head region. Essential for efficient processing of 16S rRNA. May be needed both before and after RbfA during the maturation of 16S rRNA. It has affinity for free ribosomal 30S subunits but not for 70S ribosomes. This Bifidobacterium adolescentis (strain ATCC 15703 / DSM 20083 / NCTC 11814 / E194a) protein is Ribosome maturation factor RimM.